An 89-amino-acid chain; its full sequence is GTP cyclohydrolase 1 feedback regulatory protein (89 aa).

This sequence belongs to the GFRP family. In terms of assembly, homopentamer. Forms a complex with GCH1 where a GCH1 homodecamer is sandwiched by two GFRP homopentamers.

It is found in the nucleus. Its subcellular location is the nucleus membrane. The protein localises to the cytoplasm. The protein resides in the cytosol. In terms of biological role, mediates tetrahydrobiopterin inhibition of GTP cyclohydrolase 1. The sequence is that of GTP cyclohydrolase 1 feedback regulatory protein (gchfr) from Danio rerio (Zebrafish).